The sequence spans 347 residues: Fe(2+) transport protein 1 (347 aa).

The N-terminal stretch at Met1–Ala22 is a signal peptide. Over Ile23 to Lys52 the chain is Extracellular. Residues Val53–Ser73 form a helical membrane-spanning segment. The Cytoplasmic portion of the chain corresponds to Arg74–Asn84. Residues Ile85–Val105 form a helical membrane-spanning segment. Residues Leu106–Lys125 are Extracellular-facing. A helical membrane pass occupies residues Phe126–Met146. The Cytoplasmic portion of the chain corresponds to Ala147–Arg192. Glycyl lysine isopeptide (Lys-Gly) (interchain with G-Cter in ubiquitin) cross-links involve residues Lys154 and Lys179. Residues Val193–Leu213 form a helical membrane-spanning segment. Over Gly214–Gly224 the chain is Extracellular. The chain crosses the membrane as a helical span at residues Leu225 to Leu245. Over Gln246–Lys254 the chain is Cytoplasmic. A helical transmembrane segment spans residues Phe255–Leu275. Residues Ser276–Ala286 are Extracellular-facing. A helical transmembrane segment spans residues Leu287 to Val307. The Cytoplasmic segment spans residues Asp308–Gln326. The helical transmembrane segment at Phe327 to Ala347 threads the bilayer.

It belongs to the ZIP transporter (TC 2.A.5) family. In terms of assembly, interacts with FREE1. Post-translationally, monoubiquitinated on several Lys residues. Monoubiquitination controls trafficking from the plasma membrane and targeting to the vacuole. In terms of tissue distribution, expressed in the external cell layers of the root including the lateral branching zone. Also detected in flowers before pollination.

The protein localises to the cell membrane. It is found in the early endosome. It localises to the golgi apparatus. Its subcellular location is the trans-Golgi network. The protein resides in the vacuole. High-affinity iron transporter that plays a key role in the uptake of iron from the rhizosphere across the plasma membrane in the root epidermal layer. Acts as the principal regulator of iron homeostasis in planta. Also mediates the heavy metals uptake under iron-deficiency by its ability to transport cobalt, cadmium, manganese and/or zinc ions. The sequence is that of Fe(2+) transport protein 1 (IRT1) from Arabidopsis thaliana (Mouse-ear cress).